A 182-amino-acid polypeptide reads, in one-letter code: Large ribosomal subunit protein uL5 (182 aa).

Belongs to the universal ribosomal protein uL5 family. Part of the 50S ribosomal subunit; part of the 5S rRNA/L5/L18/L25 subcomplex. Contacts the 5S rRNA and the P site tRNA. Forms a bridge to the 30S subunit in the 70S ribosome.

Functionally, this is one of the proteins that bind and probably mediate the attachment of the 5S RNA into the large ribosomal subunit, where it forms part of the central protuberance. In the 70S ribosome it contacts protein S13 of the 30S subunit (bridge B1b), connecting the 2 subunits; this bridge is implicated in subunit movement. Contacts the P site tRNA; the 5S rRNA and some of its associated proteins might help stabilize positioning of ribosome-bound tRNAs. The protein is Large ribosomal subunit protein uL5 of Thermus aquaticus.